The primary structure comprises 297 residues: Ribosomal RNA small subunit methyltransferase H (297 aa).

Residues 37-39, Glu-56, Phe-87, Asp-102, and His-109 each bind S-adenosyl-L-methionine; that span reads GGH.

This sequence belongs to the methyltransferase superfamily. RsmH family.

It is found in the cytoplasm. The enzyme catalyses cytidine(1402) in 16S rRNA + S-adenosyl-L-methionine = N(4)-methylcytidine(1402) in 16S rRNA + S-adenosyl-L-homocysteine + H(+). Functionally, specifically methylates the N4 position of cytidine in position 1402 (C1402) of 16S rRNA. This is Ribosomal RNA small subunit methyltransferase H from Borrelia hermsii (strain HS1 / DAH).